A 676-amino-acid chain; its full sequence is tRNA uridine 5-carboxymethylaminomethyl modification enzyme MnmG (676 aa).

Residue 15-20 coordinates FAD; the sequence is GAGHAG. 316–330 is a binding site for NAD(+); the sequence is GPRYCPSIEDKIVRF.

Belongs to the MnmG family. As to quaternary structure, homodimer. Heterotetramer of two MnmE and two MnmG subunits. The cofactor is FAD.

It is found in the cytoplasm. Its function is as follows. NAD-binding protein involved in the addition of a carboxymethylaminomethyl (cmnm) group at the wobble position (U34) of certain tRNAs, forming tRNA-cmnm(5)s(2)U34. The protein is tRNA uridine 5-carboxymethylaminomethyl modification enzyme MnmG of Roseiflexus castenholzii (strain DSM 13941 / HLO8).